The chain runs to 104 residues: Pyrimidine/purine nucleoside phosphorylase (104 aa).

This sequence belongs to the nucleoside phosphorylase PpnP family.

The enzyme catalyses a purine D-ribonucleoside + phosphate = a purine nucleobase + alpha-D-ribose 1-phosphate. It carries out the reaction adenosine + phosphate = alpha-D-ribose 1-phosphate + adenine. It catalyses the reaction cytidine + phosphate = cytosine + alpha-D-ribose 1-phosphate. The catalysed reaction is guanosine + phosphate = alpha-D-ribose 1-phosphate + guanine. The enzyme catalyses inosine + phosphate = alpha-D-ribose 1-phosphate + hypoxanthine. It carries out the reaction thymidine + phosphate = 2-deoxy-alpha-D-ribose 1-phosphate + thymine. It catalyses the reaction uridine + phosphate = alpha-D-ribose 1-phosphate + uracil. The catalysed reaction is xanthosine + phosphate = alpha-D-ribose 1-phosphate + xanthine. Functionally, catalyzes the phosphorolysis of diverse nucleosides, yielding D-ribose 1-phosphate and the respective free bases. Can use uridine, adenosine, guanosine, cytidine, thymidine, inosine and xanthosine as substrates. Also catalyzes the reverse reactions. The protein is Pyrimidine/purine nucleoside phosphorylase of Hydrogenovibrio crunogenus (strain DSM 25203 / XCL-2) (Thiomicrospira crunogena).